Reading from the N-terminus, the 435-residue chain is GTPase Der (435 aa).

EngA-type G domains follow at residues 4–167 (PVVA…PAEK) and 175–350 (ISFS…DNQN). Residues 10-17 (GQPNVGKS), 57-61 (DTGGI), 119-122 (NKAD), 181-188 (GRPNVGKS), 228-232 (DTAGI), and 293-296 (NKWD) contribute to the GTP site. One can recognise a KH-like domain in the interval 351 to 435 (QRIQSSVLND…PIKILPRKRK (85 aa)).

It belongs to the TRAFAC class TrmE-Era-EngA-EngB-Septin-like GTPase superfamily. EngA (Der) GTPase family. Associates with the 50S ribosomal subunit.

Its function is as follows. GTPase that plays an essential role in the late steps of ribosome biogenesis. The polypeptide is GTPase Der (Lactobacillus acidophilus (strain ATCC 700396 / NCK56 / N2 / NCFM)).